Here is a 120-residue protein sequence, read N- to C-terminus: Large ribosomal subunit protein uL18 (120 aa).

The protein belongs to the universal ribosomal protein uL18 family. As to quaternary structure, part of the 50S ribosomal subunit; part of the 5S rRNA/L5/L18/L25 subcomplex. Contacts the 5S and 23S rRNAs.

Functionally, this is one of the proteins that bind and probably mediate the attachment of the 5S RNA into the large ribosomal subunit, where it forms part of the central protuberance. This is Large ribosomal subunit protein uL18 from Rippkaea orientalis (strain PCC 8801 / RF-1) (Cyanothece sp. (strain PCC 8801)).